Here is a 431-residue protein sequence, read N- to C-terminus: Serine--tRNA ligase (431 aa).

238 to 240 (TAE) is a binding site for L-serine. An ATP-binding site is contributed by 269 to 271 (RSE). L-serine is bound at residue E292. 356–359 (EISS) is a binding site for ATP. S392 is a binding site for L-serine.

The protein belongs to the class-II aminoacyl-tRNA synthetase family. Type-1 seryl-tRNA synthetase subfamily. In terms of assembly, homodimer. The tRNA molecule binds across the dimer.

It is found in the cytoplasm. The catalysed reaction is tRNA(Ser) + L-serine + ATP = L-seryl-tRNA(Ser) + AMP + diphosphate + H(+). It catalyses the reaction tRNA(Sec) + L-serine + ATP = L-seryl-tRNA(Sec) + AMP + diphosphate + H(+). Its pathway is aminoacyl-tRNA biosynthesis; selenocysteinyl-tRNA(Sec) biosynthesis; L-seryl-tRNA(Sec) from L-serine and tRNA(Sec): step 1/1. Catalyzes the attachment of serine to tRNA(Ser). Is also able to aminoacylate tRNA(Sec) with serine, to form the misacylated tRNA L-seryl-tRNA(Sec), which will be further converted into selenocysteinyl-tRNA(Sec). The polypeptide is Serine--tRNA ligase (Pectobacterium atrosepticum (strain SCRI 1043 / ATCC BAA-672) (Erwinia carotovora subsp. atroseptica)).